The primary structure comprises 157 residues: MNNLNSENMCNCCNSANSCGGTNGISWDREKCEYCGPCAIKCPNDAIMVVNPKGLELPSRAKTERANEFKMCDLCGTCVSACPTEALQMGKIVHNEKEYDRIEFTPSLCDSCGACVEICPQNVLKLNEEYKLKGFCVMCLKCIDACDKTNQNALSLK.

3 4Fe-4S ferredoxin-type domains span residues 23-52, 62-92, and 100-129; these read NGIS…VVNP, KTER…MGKI, and DRIE…LNEE. [4Fe-4S] cluster is bound by residues Cys-32, Cys-35, Cys-38, Cys-42, Cys-72, Cys-75, Cys-78, Cys-82, Cys-109, Cys-112, Cys-115, Cys-119, Cys-136, Cys-139, Cys-142, and Cys-146.

It depends on [4Fe-4S] cluster as a cofactor.

This is Polyferredoxin protein VhcB (vhcB) from Methanococcus voltae.